The following is a 188-amino-acid chain: Glandular kallikrein-3, submandibular (188 aa).

In terms of domain architecture, Peptidase S1 spans 1–185 (NYHVLLGQNN…FTSWIKEVMK (185 aa)). Asparagine 10 and asparagine 36 each carry an N-linked (GlcNAc...) asparagine glycan. Aspartate 47 serves as the catalytic Charge relay system. Disulfide bonds link cysteine 79-cysteine 146, cysteine 111-cysteine 125, and cysteine 136-cysteine 161. The Charge relay system role is filled by serine 140.

Belongs to the peptidase S1 family. Kallikrein subfamily.

The catalysed reaction is Preferential cleavage of Arg-|-Xaa bonds in small molecule substrates. Highly selective action to release kallidin (lysyl-bradykinin) from kininogen involves hydrolysis of Met-|-Xaa or Leu-|-Xaa.. Its function is as follows. Glandular kallikreins cleave Met-Lys and Arg-Ser bonds in kininogen to release Lys-bradykinin. The chain is Glandular kallikrein-3, submandibular (Klk3) from Rattus norvegicus (Rat).